Here is a 327-residue protein sequence, read N- to C-terminus: Beta-ketoacyl-[acyl-carrier-protein] synthase III (327 aa).

Residues Cys-114 and His-254 contribute to the active site. The segment at Gln-255–Arg-259 is ACP-binding. The active site involves Asn-284.

Belongs to the thiolase-like superfamily. FabH family. As to quaternary structure, homodimer.

The protein localises to the cytoplasm. It carries out the reaction malonyl-[ACP] + acetyl-CoA + H(+) = 3-oxobutanoyl-[ACP] + CO2 + CoA. The protein operates within lipid metabolism; fatty acid biosynthesis. Catalyzes the condensation reaction of fatty acid synthesis by the addition to an acyl acceptor of two carbons from malonyl-ACP. Catalyzes the first condensation reaction which initiates fatty acid synthesis and may therefore play a role in governing the total rate of fatty acid production. Possesses both acetoacetyl-ACP synthase and acetyl transacylase activities. Its substrate specificity determines the biosynthesis of branched-chain and/or straight-chain of fatty acids. The sequence is that of Beta-ketoacyl-[acyl-carrier-protein] synthase III from Lactobacillus helveticus (strain DPC 4571).